The following is a 577-amino-acid chain: Arginine--tRNA ligase (577 aa).

Residues proline 122–histidine 132 carry the 'HIGH' region motif.

It belongs to the class-I aminoacyl-tRNA synthetase family. In terms of assembly, monomer.

Its subcellular location is the cytoplasm. It carries out the reaction tRNA(Arg) + L-arginine + ATP = L-arginyl-tRNA(Arg) + AMP + diphosphate. This Escherichia coli O157:H7 (strain EC4115 / EHEC) protein is Arginine--tRNA ligase.